Consider the following 218-residue polypeptide: Structural protein V19 (218 aa).

It localises to the virion. In Sputnik virophage, this protein is Structural protein V19.